Reading from the N-terminus, the 350-residue chain is Pleckstrin (350 aa).

In terms of domain architecture, PH 1 spans 4-101; sequence KRIREGYLVK…WVRDIKKAIK (98 aa). Residue lysine 64 is modified to N6-acetyllysine. 2 positions are modified to phosphoserine: serine 113 and serine 117. The 86-residue stretch at 136–221 folds into the DEP domain; sequence PEKGIKELNL…NPDAFYYFPD (86 aa). Residues 244–347 form the PH 2 domain; the sequence is IIIKQGCLLK…WIKAIQVASR (104 aa).

Its function is as follows. Major protein kinase C substrate of platelets. In Rattus norvegicus (Rat), this protein is Pleckstrin (Plek).